Here is a 366-residue protein sequence, read N- to C-terminus: Mitogen-activated protein kinase CPK1 (366 aa).

The Protein kinase domain maps to 17–302 (KLEEIVGEGA…SPSKRITVEE (286 aa)). ATP contacts are provided by residues 22 to 30 (VGEGAYGLV) and Lys-45. Asp-140 acts as the Proton acceptor in catalysis. Thr-181 carries the phosphothreonine modification. The TXY motif lies at 181 to 183 (TEY). Tyr-183 bears the Phosphotyrosine mark.

The protein belongs to the protein kinase superfamily. CMGC Ser/Thr protein kinase family. MAP kinase subfamily. Requires Mg(2+) as cofactor. Dually phosphorylated on Thr-181 and Tyr-183, which activates the enzyme.

The catalysed reaction is L-seryl-[protein] + ATP = O-phospho-L-seryl-[protein] + ADP + H(+). It catalyses the reaction L-threonyl-[protein] + ATP = O-phospho-L-threonyl-[protein] + ADP + H(+). Activated by tyrosine and threonine phosphorylation. Responds to activation by environmental stress by phosphorylating downstream targets. The polypeptide is Mitogen-activated protein kinase CPK1 (CPK1) (Cryptococcus neoformans var. neoformans serotype D (strain B-3501A) (Filobasidiella neoformans)).